Reading from the N-terminus, the 96-residue chain is Large ribosomal subunit protein eL14 (96 aa).

Belongs to the eukaryotic ribosomal protein eL14 family.

This is Large ribosomal subunit protein eL14 from Metallosphaera sedula (strain ATCC 51363 / DSM 5348 / JCM 9185 / NBRC 15509 / TH2).